The sequence spans 349 residues: N-acetyltaurine hydrolase (349 aa).

Histidine 26, histidine 28, glutamate 169, histidine 201, histidine 230, and aspartate 298 together coordinate a divalent metal cation.

Belongs to the metallo-dependent hydrolases superfamily. Phosphotriesterase family. A divalent metal cation serves as cofactor.

Its subcellular location is the cytoplasm. It is found in the cytosol. It carries out the reaction N-acetyltaurine + H2O = taurine + acetate. The catalysed reaction is N-propanoyltaurine + H2O = propanoate + taurine. It catalyses the reaction N-acetyl-L-methionine + H2O = L-methionine + acetate. The enzyme catalyses N-acetyl-L-isoleucine + H2O = L-isoleucine + acetate. It carries out the reaction N-acetyl-L-leucine + H2O = L-leucine + acetate. The catalysed reaction is N-acetyl-L-valine + H2O = L-valine + acetate. In terms of biological role, N-acetyltaurine hydrolase that catalyzes the hydrolysis of N-acetyltaurine into taurine and acetate. PTER also acts on other N-acetyl amino acids (Met, Ile, Leu, Val) and N-propionyltaurine, but at lower rates. The sequence is that of N-acetyltaurine hydrolase (pter) from Salmo salar (Atlantic salmon).